Consider the following 167-residue polypeptide: Small ribosomal subunit protein uS5 (167 aa).

An S5 DRBM domain is found at 11–74 (LQEKLIAVNR…EKARRAMINV (64 aa)).

This sequence belongs to the universal ribosomal protein uS5 family. Part of the 30S ribosomal subunit. Contacts proteins S4 and S8.

In terms of biological role, with S4 and S12 plays an important role in translational accuracy. Its function is as follows. Located at the back of the 30S subunit body where it stabilizes the conformation of the head with respect to the body. The chain is Small ribosomal subunit protein uS5 from Serratia proteamaculans (strain 568).